The primary structure comprises 321 residues: Agamous-like MADS-box protein AGL80 (321 aa).

The MADS-box domain occupies 1–61 (MTRKKVKLAY…DTNPEVWPSN (61 aa)). A coiled-coil region spans residues 89-114 (FLKQRIAKATETLRRQRKDSRELEMT).

As to quaternary structure, interacts with AGL61 and AGL62. Forms a heterodimer with AGL61. Interacts with MEE14/CBP1. Expressed in the central cell of the female gametophyte and in early endosperm. Also detected in ovaries, young siliques, roots, leaves, stems, young flowers and anthers.

It is found in the nucleus. Probable transcription factor. Controls central cell differentiation during female gametophyte development. Required for the expression of DEMETER and DD46, but not for the expression of FIS2. Probable transcription factor that may function in the maintenance of the proper function of the central cell in pollen tube attraction. In Arabidopsis thaliana (Mouse-ear cress), this protein is Agamous-like MADS-box protein AGL80 (AGL80).